The sequence spans 1044 residues: Integrin alpha-8 (1044 aa).

A signal peptide spans 1–23 (MPRRQPPRPLLLLSALLCAPASA). At 24–991 (FNLDEEKLTV…WSTPNVSFVI (968 aa)) the chain is on the extracellular side. FG-GAP repeat units follow at residues 28-90 (EEKL…RCRQ), 104-165 (NGTR…AYAE), 170-222 (RNSN…ITNY), 236-288 (QTGV…SSDL), 289-354 (TFIQ…FLFR), 355-413 (DPQI…GLKT), and 417-480 (QVLN…LNPM). N-linked (GlcNAc...) asparagine glycosylation occurs at Asn66. Cys81 and Cys88 form a disulfide bridge. A glycan (N-linked (GlcNAc...) asparagine) is linked at Asn104. Cysteines 132 and 153 form a disulfide. Residue Asn159 is glycosylated (N-linked (GlcNAc...) asparagine). A disulfide bond links Cys169 and Cys182. Asn221 carries N-linked (GlcNAc...) asparagine glycosylation. Glu257, Thr259, Asp261, and Glu265 together coordinate Ca(2+). 2 N-linked (GlcNAc...) asparagine glycosylation sites follow: Asn284 and Asn293. 10 residues coordinate Ca(2+): Asp311, Asn313, Asp315, Leu317, Asp319, Asp377, Asn379, Asp381, Tyr383, and Asp385. The Cell attachment site signature appears at 437 to 439 (RGD). Ca(2+) is bound by residues Asp441, Asp443, Asn445, Tyr447, and Asp449. Asn486 is a glycosylation site (N-linked (GlcNAc...) asparagine). 2 disulfides stabilise this stretch: Cys489-Cys500 and Cys506-Cys562. A glycan (N-linked (GlcNAc...) asparagine) is linked at Asn587. 2 disulfide bridges follow: Cys623/Cys629 and Cys695/Cys708. Asn701, Asn719, Asn751, Asn762, Asn818, Asn877, and Asn904 each carry an N-linked (GlcNAc...) asparagine glycan. Disulfide bonds link Cys849–Cys905 and Cys910–Cys915. Asn952 and Asn986 each carry an N-linked (GlcNAc...) asparagine glycan. Residues 992–1015 (PLWVIILAIMLGLLVLAVLTLALW) traverse the membrane as a helical segment. Residues 1016–1044 (KCGFFDRARPPQDDMADREQLTNNKTTDA) are Cytoplasmic-facing.

This sequence belongs to the integrin alpha chain family. As to quaternary structure, heterodimer of an alpha and a beta subunit. The alpha subunit is composed of a heavy and a light chain linked by a disulfide bond. Alpha-8 associates with beta-1. In terms of tissue distribution, prominently expressed on axons and on cells in contact with basal laminae in embryos.

It is found in the membrane. Its subcellular location is the cell membrane. Functionally, integrin alpha-8/beta-1 functions in the genesis of kidney and probably of other organs by regulating the recruitment of mesenchymal cells into epithelial structures. It recognizes the sequence R-G-D in a wide array of ligands including TNC, FN1, SPP1, TGFB1, TGFB3 and VTN. NPNT is probably its functional ligand in kidney genesis. Neuronal receptor for TNC it mediates cell-cell interactions and regulates neurite outgrowth of sensory and motor neurons. The polypeptide is Integrin alpha-8 (ITGA8) (Gallus gallus (Chicken)).